Here is a 428-residue protein sequence, read N- to C-terminus: tRNA modification GTPase MnmE (428 aa).

3 residues coordinate (6S)-5-formyl-5,6,7,8-tetrahydrofolate: arginine 20, glutamate 77, and lysine 117. Residues 213-351 (GFEVAIIGPP…LVQRISDVLK (139 aa)) form the TrmE-type G domain. K(+) is bound at residue asparagine 223. GTP-binding positions include 223–228 (NAGKST), 242–248 (SEVAGTT), and 267–270 (DTAG). Serine 227 provides a ligand contact to Mg(2+). K(+) contacts are provided by serine 242, valine 244, and threonine 247. Threonine 248 is a binding site for Mg(2+). Residue lysine 428 participates in (6S)-5-formyl-5,6,7,8-tetrahydrofolate binding.

It belongs to the TRAFAC class TrmE-Era-EngA-EngB-Septin-like GTPase superfamily. TrmE GTPase family. Homodimer. Heterotetramer of two MnmE and two MnmG subunits. K(+) serves as cofactor.

It localises to the cytoplasm. Functionally, exhibits a very high intrinsic GTPase hydrolysis rate. Involved in the addition of a carboxymethylaminomethyl (cmnm) group at the wobble position (U34) of certain tRNAs, forming tRNA-cmnm(5)s(2)U34. The polypeptide is tRNA modification GTPase MnmE (Ruegeria pomeroyi (strain ATCC 700808 / DSM 15171 / DSS-3) (Silicibacter pomeroyi)).